We begin with the raw amino-acid sequence, 1346 residues long: Adhesion G protein-coupled receptor F5 (1346 aa).

Positions 1–21 (MKSPRRTTLCLMFIVIYSSKA) are cleaved as a signal peptide. At 22 to 1006 (ALNWNYESTI…MSPDSPDPSS (985 aa)) the chain is on the extracellular side. N-linked (GlcNAc...) asparagine glycosylation is found at Asn-73, Asn-94, Asn-106, Asn-188, Asn-256, Asn-272, Asn-301, Asn-315, Asn-328, Asn-398, Asn-472, Asn-487, Asn-505, Asn-540, Asn-627, Asn-649, Asn-666, Asn-820, Asn-931, Asn-963, and Asn-982. The region spanning 166–273 (LQEDVTLNMR…NSFQAVTINE (108 aa)) is the SEA domain. Ig-like domains follow at residues 267–368 (QAVT…IDVM), 369–466 (PIQI…IKVT), and 471–561 (ANLT…KDVI). Cystine bridges form between Cys-293-Cys-350 and Cys-391-Cys-449. A disulfide bond links Cys-492 and Cys-545. Residues 842 to 1003 (PPLSFSQTNV…SILMSPDSPD (162 aa)) form the GAIN-B domain. 2 disulfide bridges follow: Cys-954–Cys-985 and Cys-973–Cys-987. The segment at 954-1003 (CVFWNFRLANNTGGWDSSGCYVEEGDGDNVTCICDHLTSFSILMSPDSPD) is GPS. The tract at residues 991–1006 (TSFSILMSPDSPDPSS) is tethered agonist. A helical membrane pass occupies residues 1007 to 1027 (LLGILLDIISYVGVGFSILSL). The Cytoplasmic segment spans residues 1028–1053 (AACLVVEAVVWKSVTKNRTSYMRHTC). A helical transmembrane segment spans residues 1054-1074 (IVNIAASLLVANTWFIVVAAI). At 1075–1090 (QDNRYILCKTACVAAT) the chain is on the extracellular side. A helical transmembrane segment spans residues 1091 to 1111 (FFIHFFYLSVFFWMLTLGLML). Topologically, residues 1112–1128 (FYRLVFILHETSRSTQK) are cytoplasmic. Residues 1129–1149 (AIAFCLGYGCPLAISVITLGA) form a helical membrane-spanning segment. Topologically, residues 1150 to 1173 (TQPREVYTRKNVCWLNWEDTKALL) are extracellular. Residues 1174-1194 (AFAIPALIIVVVNITITIVVI) traverse the membrane as a helical segment. The Cytoplasmic portion of the chain corresponds to 1195-1220 (TKILRPSIGDKPCKQEKSSLFQISKS). The helical transmembrane segment at 1221–1241 (IGVLTPLLGLTWGFGLTTVFP) threads the bilayer. Residues 1242–1244 (GTN) lie on the Extracellular side of the membrane. Residues 1245–1265 (LVFHIIFAILNVFQGLFILLF) form a helical membrane-spanning segment. Over 1266–1346 (GCLWDLKVQE…NSSSASSLLN (81 aa)) the chain is Cytoplasmic. Residue Thr-1300 is modified to Phosphothreonine. Position 1307 is a phosphoserine (Ser-1307). The disordered stretch occupies residues 1327-1346 (TPEATSSSLENSSSASSLLN). Residues 1329-1346 (EATSSSLENSSSASSLLN) show a composition bias toward low complexity.

Belongs to the G-protein coupled receptor 2 family. Adhesion G-protein coupled receptor (ADGR) subfamily. As to quaternary structure, homodimer; disulfide-linked. Heterodimer of 2 chains generated by proteolytic processing; the large extracellular N-terminal fragment and the membrane-bound C-terminal fragment predominantly remain associated and non-covalently linked. Fragment generates by the processing enzyme furin remains attached to the extracellular N-terminal fragment. Interacts (via N-terminal extracellular domain) with SFTPD. In terms of processing, highly glycosylated. Post-translationally, proteolytically cleaved at multiple sites: one in the GPS region of the GAIN-B domain (S1 site) and the other in the SEA domain (S2 site). The proteolytic cleavage at S1 site generates an extracellular subunit and a seven-transmembrane subunit. The proteolytic cleavage at S2 site generates a fragment that undergoes proteolytic cleavage by the processing enzyme furin. Expressed in lung endothelial cells and in alveolar type II (ATII) cells (at protein level). Expressed high levels in subcutaneous adipose tissue in lean individuals and at lower levels in visceral fat. Expression levels in subcutaneous adipose tissue drastically drop in obese individuals.

It localises to the cell membrane. With respect to regulation, as an adhesion G protein-coupled receptor (aGPCR) exhibits a large N-terminal extracellular domain containing highly conserved GPCR autoproteolysis-inducing (GAIN) domain. During synthesis, intracellular autoproteolytic processing of nascent chain within the GAIN domain generates a mature protein, consisting of an N-terminal fragment that is non-covalently linked to the C-terminal fragment. The mature protein is routed to the plasma membrane where the N- and C-terminal fragments remain associated, forming the holoreceptor. Dissociation of the aGPCR fragments stimulates G protein signaling through the action of the tethered-peptide agonist stalk that is occluded within the GAIN domain in the holoreceptor form. This dissociation might be induced by ligand binding, such as that of sFNDC4. Its function is as follows. Adhesion G protein-coupled receptor. In alveolar type II (ATII or AT2) cells, required for normal lung surfactant homeostasis. Modulation of both surfactant secretion and uptake by ATII cells is mediated by the downstream activation of GNAQ/GNA11 proteins and may be a consequence of increased cortical F-actin assembly induced by ADGRF5 activation. In the kidney, may play a role in the regulation of acid excretion into the primary urine, possibly by regulating the surface expression of V-ATPase proton pump. As a receptor for soluble FNDC4 (sFNDC4), required for proper systemic glucose tolerance, specifically sensitizing white adipose tissue to insulin. Also plays a role in sFNDC4-induced decrease of local inflammation in white adipose tissue. The polypeptide is Adhesion G protein-coupled receptor F5 (Homo sapiens (Human)).